The following is a 395-amino-acid chain: Ribosomal RNA large subunit methyltransferase I (395 aa).

Residues 2 to 79 (SSRVTLHPGR…QNESVDNGFF (78 aa)) form the PUA domain.

It belongs to the methyltransferase superfamily. RlmI family.

The protein localises to the cytoplasm. The catalysed reaction is cytidine(1962) in 23S rRNA + S-adenosyl-L-methionine = 5-methylcytidine(1962) in 23S rRNA + S-adenosyl-L-homocysteine + H(+). Its function is as follows. Specifically methylates the cytosine at position 1962 (m5C1962) of 23S rRNA. This Pseudoalteromonas atlantica (strain T6c / ATCC BAA-1087) protein is Ribosomal RNA large subunit methyltransferase I.